The sequence spans 1002 residues: uncharacterized protein (1002 aa).

This is an uncharacterized protein from Fiji disease virus (isolate Sugarcane) (FDV).